A 353-amino-acid chain; its full sequence is Putative glutamine synthetase (353 aa).

The GS beta-grasp domain occupies 19–102 (SIIEYVWIGG…VICDTYDVNG (84 aa)). The GS catalytic domain maps to 109–353 (HRHNANIIFE…IILQTVCESD (245 aa)).

Belongs to the glutamine synthetase family.

The enzyme catalyses L-glutamate + NH4(+) + ATP = L-glutamine + ADP + phosphate + H(+). The polypeptide is Putative glutamine synthetase (Acanthamoeba polyphaga (Amoeba)).